Reading from the N-terminus, the 223-residue chain is Flagellar L-ring protein 2 (223 aa).

Positions 1–17 (MKWLSKSWAVAVVLLVG) are cleaved as a signal peptide. Cys18 is lipidated: N-palmitoyl cysteine. The S-diacylglycerol cysteine moiety is linked to residue Cys18.

The protein belongs to the FlgH family. In terms of assembly, the basal body constitutes a major portion of the flagellar organelle and consists of four rings (L,P,S, and M) mounted on a central rod.

Its subcellular location is the cell outer membrane. The protein resides in the bacterial flagellum basal body. In terms of biological role, assembles around the rod to form the L-ring and probably protects the motor/basal body from shearing forces during rotation. The protein is Flagellar L-ring protein 2 of Vibrio parahaemolyticus serotype O3:K6 (strain RIMD 2210633).